We begin with the raw amino-acid sequence, 332 residues long: Diaminopimelate epimerase (332 aa).

2 residues coordinate substrate: N13 and N73. The active-site Proton donor is C82. Substrate is bound by residues 83 to 84 (GN), N172, N209, and 227 to 228 (ER). C236 serves as the catalytic Proton acceptor. 237 to 238 (GT) lines the substrate pocket.

This sequence belongs to the diaminopimelate epimerase family. Homodimer.

The protein resides in the cytoplasm. It carries out the reaction (2S,6S)-2,6-diaminopimelate = meso-2,6-diaminopimelate. It functions in the pathway amino-acid biosynthesis; L-lysine biosynthesis via DAP pathway; DL-2,6-diaminopimelate from LL-2,6-diaminopimelate: step 1/1. Its function is as follows. Catalyzes the stereoinversion of LL-2,6-diaminopimelate (L,L-DAP) to meso-diaminopimelate (meso-DAP), a precursor of L-lysine and an essential component of the bacterial peptidoglycan. This Lactiplantibacillus plantarum (strain ATCC BAA-793 / NCIMB 8826 / WCFS1) (Lactobacillus plantarum) protein is Diaminopimelate epimerase.